The sequence spans 371 residues: 4-hydroxy-3-methylbut-2-en-1-yl diphosphate synthase (flavodoxin) (371 aa).

Positions 270, 273, 305, and 312 each coordinate [4Fe-4S] cluster.

This sequence belongs to the IspG family. It depends on [4Fe-4S] cluster as a cofactor.

It catalyses the reaction (2E)-4-hydroxy-3-methylbut-2-enyl diphosphate + oxidized [flavodoxin] + H2O + 2 H(+) = 2-C-methyl-D-erythritol 2,4-cyclic diphosphate + reduced [flavodoxin]. The protein operates within isoprenoid biosynthesis; isopentenyl diphosphate biosynthesis via DXP pathway; isopentenyl diphosphate from 1-deoxy-D-xylulose 5-phosphate: step 5/6. Converts 2C-methyl-D-erythritol 2,4-cyclodiphosphate (ME-2,4cPP) into 1-hydroxy-2-methyl-2-(E)-butenyl 4-diphosphate. In Shewanella pealeana (strain ATCC 700345 / ANG-SQ1), this protein is 4-hydroxy-3-methylbut-2-en-1-yl diphosphate synthase (flavodoxin).